Consider the following 180-residue polypeptide: Acireductone dioxygenase (180 aa).

Fe(2+) contacts are provided by His99, His101, Glu105, and His145. 4 residues coordinate Ni(2+): His99, His101, Glu105, and His145.

It belongs to the acireductone dioxygenase (ARD) family. Monomer. It depends on Fe(2+) as a cofactor. The cofactor is Ni(2+).

It catalyses the reaction 1,2-dihydroxy-5-(methylsulfanyl)pent-1-en-3-one + O2 = 3-(methylsulfanyl)propanoate + CO + formate + 2 H(+). It carries out the reaction 1,2-dihydroxy-5-(methylsulfanyl)pent-1-en-3-one + O2 = 4-methylsulfanyl-2-oxobutanoate + formate + 2 H(+). It functions in the pathway amino-acid biosynthesis; L-methionine biosynthesis via salvage pathway; L-methionine from S-methyl-5-thio-alpha-D-ribose 1-phosphate: step 5/6. Functionally, catalyzes 2 different reactions between oxygen and the acireductone 1,2-dihydroxy-3-keto-5-methylthiopentene (DHK-MTPene) depending upon the metal bound in the active site. Fe-containing acireductone dioxygenase (Fe-ARD) produces formate and 2-keto-4-methylthiobutyrate (KMTB), the alpha-ketoacid precursor of methionine in the methionine recycle pathway. Ni-containing acireductone dioxygenase (Ni-ARD) produces methylthiopropionate, carbon monoxide and formate, and does not lie on the methionine recycle pathway. The sequence is that of Acireductone dioxygenase from Geobacillus kaustophilus (strain HTA426).